Reading from the N-terminus, the 344-residue chain is Beta-1,4-galactosyltransferase 4 (344 aa).

At 1 to 12 the chain is on the cytoplasmic side; that stretch reads MGCNPPYLLSYR. The helical; Signal-anchor for type II membrane protein transmembrane segment at 13–38 threads the bilayer; that stretch reads LRLLLLFTLCLTVLGWATSNYFVGAI. Topologically, residues 39-344 are lumenal; it reads QVIPRAKNFM…NITVDFWTAA (306 aa). Residues Cys-77 and Cys-118 are joined by a disulfide bond. UDP-alpha-D-galactose is bound by residues 129-133, 168-170, and 195-196; these read PHRNR, FNR, and VD. Cysteines 189 and 208 form a disulfide. Asp-196 is a binding site for Mn(2+). Asn-220 is a glycosylation site (N-linked (GlcNAc...) asparagine). 2 residues coordinate UDP-alpha-D-galactose: Tyr-224 and Trp-256. 258–261 contributes to the N-acetyl-D-glucosamine binding site; sequence GEDD. His-289 lines the Mn(2+) pocket. 289-291 serves as a coordination point for UDP-alpha-D-galactose; sequence HTR. An N-acetyl-D-glucosamine-binding site is contributed by Arg-301. N-linked (GlcNAc...) asparagine glycosylation occurs at Asn-335.

This sequence belongs to the glycosyltransferase 7 family. Interacts with SLC35A2/UGT1. The cofactor is Mn(2+).

It is found in the golgi apparatus membrane. The protein resides in the secreted. The enzyme catalyses N-acetyl-D-glucosamine + UDP-alpha-D-galactose = beta-D-galactosyl-(1-&gt;4)-N-acetyl-D-glucosamine + UDP + H(+). It carries out the reaction a beta-D-GlcNAc-(1-&gt;3)-beta-D-Gal-(1-&gt;4)-beta-D-Glc-(1&lt;-&gt;1)-Cer(d18:1(4E)) + UDP-alpha-D-galactose = a neolactoside nLc4Cer(d18:1(4E)) + UDP + H(+). It catalyses the reaction 3-O-{beta-D-galactosyl-(1-&gt;3)-[6-O-sulfo-N-acetyl-beta-D-glucosaminyl-(1-&gt;6)]-N-acetyl-alpha-D-galactosaminyl}-L-seryl-[protein] + UDP-alpha-D-galactose = 3-O-{beta-D-galactosyl-(1-&gt;3)-[beta-D-galactosyl-(1-&gt;4)-6-O-sulfo-N-acetyl-beta-D-glucosaminyl-(1-&gt;6)]-N-acetyl-alpha-D-galactosaminyl}-L-seryl-[protein] + UDP + H(+). The catalysed reaction is 3-O-{beta-D-galactosyl-(1-&gt;3)-[6-O-sulfo-N-acetyl-beta-D-glucosaminyl-(1-&gt;6)]-N-acetyl-alpha-D-galactosaminyl}-L-threonyl-[protein] + UDP-alpha-D-galactose = 3-O-{beta-D-galactosyl-(1-&gt;3)-[beta-D-galactosyl-(1-&gt;4)-6-O-sulfo-N-acetyl-beta-D-glucosaminyl-(1-&gt;6)]-N-acetyl-alpha-D-galactosaminyl}-L-threonyl-[protein] + UDP + H(+). The protein operates within protein modification; protein glycosylation. It functions in the pathway glycolipid biosynthesis. In terms of biological role, galactose (Gal) transferase involved in the synthesis of terminal N-acetyllactosamine (LacNac) unit present on glycan chains of glycoproteins and glycosphingolipids. Catalyzes the transfer of Gal residue via a beta1-&gt;4 linkage from UDP-Gal to the non-reducing terminal N-acetyl glucosamine 6-O-sulfate (6-O-sulfoGlcNAc) in the linearly growing chain of both N- and O-linked keratan sulfate proteoglycans. Cooperates with B3GNT7 N-acetyl glucosamine transferase and CHST6 and CHST1 sulfotransferases to construct and elongate mono- and disulfated disaccharide units [-&gt;3Galbeta1-&gt;4(6-sulfoGlcNAcbeta)1-&gt;] and [-&gt;3(6-sulfoGalbeta)1-&gt;4(6-sulfoGlcNAcbeta)1-&gt;] within keratan sulfate polymer. Transfers Gal residue via a beta1-&gt;4 linkage to terminal 6-O-sulfoGlcNAc within the LacNac unit of core 2 O-glycans forming 6-sulfo-sialyl-Lewis X (sLex). May contribute to the generation of sLex epitope on mucin-type glycoproteins that serve as ligands for SELL/L-selectin, a major regulator of leukocyte migration. In the biosynthesis pathway of neolacto-series glycosphingolipids, transfers Gal residue via a beta1-&gt;4 linkage to terminal GlcNAc of a lactotriaosylceramide (Lc3Cer) acceptor to form a neolactotetraosylceramide. In Rattus norvegicus (Rat), this protein is Beta-1,4-galactosyltransferase 4 (B4galt4).